Consider the following 369-residue polypeptide: Deacetylase EF_0837 (369 aa).

Zn(2+) is bound by residues His-58, His-60, Lys-152, His-186, His-209, and Asp-270. An N6-carboxylysine modification is found at Lys-152.

Belongs to the metallo-dependent hydrolases superfamily. Atu3266/EF_0837 deacetylase family. Zn(2+) is required as a cofactor.

In terms of biological role, esterase that can catalyze the deacetylation of acetyl-(R)-mandelate, but with very low efficiency (in vitro). This is Deacetylase EF_0837 from Enterococcus faecalis (strain ATCC 700802 / V583).